The following is a 91-amino-acid chain: Small ribosomal subunit protein bS16c (91 aa).

This sequence belongs to the bacterial ribosomal protein bS16 family.

It localises to the plastid. The protein localises to the chloroplast. This chain is Small ribosomal subunit protein bS16c, found in Vitis vinifera (Grape).